A 680-amino-acid chain; its full sequence is Trehalase (680 aa).

A disordered region spans residues Met1 to Gly27.

This sequence belongs to the glycosyl hydrolase 15 family. In terms of assembly, homomultimer. Phosphate serves as cofactor.

The catalysed reaction is alpha,alpha-trehalose + H2O = alpha-D-glucose + beta-D-glucose. It participates in glycan degradation; trehalose degradation; D-glucose from alpha,alpha-trehalose: step 1/1. Its function is as follows. Catalyzes the hydrolysis of alpha,alpha-trehalose into two molecules of D-glucose. This is Trehalase from Mycobacterium tuberculosis (strain ATCC 25618 / H37Rv).